We begin with the raw amino-acid sequence, 212 residues long: uncharacterized protein (212 aa).

This is an uncharacterized protein from Rickettsia prowazekii (strain Madrid E).